The chain runs to 487 residues: 3-octaprenyl-4-hydroxybenzoate carboxy-lyase (487 aa).

Mn(2+) is bound at residue Asn-172. Prenylated FMN-binding positions include 175–177 (IYR), 189–191 (RWL), and 194–195 (RG). A Mn(2+)-binding site is contributed by Glu-238. The active-site Proton donor is the Asp-287.

Belongs to the UbiD family. In terms of assembly, homohexamer. Prenylated FMN serves as cofactor. Requires Mn(2+) as cofactor.

It is found in the cell membrane. The catalysed reaction is a 4-hydroxy-3-(all-trans-polyprenyl)benzoate + H(+) = a 2-(all-trans-polyprenyl)phenol + CO2. It functions in the pathway cofactor biosynthesis; ubiquinone biosynthesis. Catalyzes the decarboxylation of 3-octaprenyl-4-hydroxy benzoate to 2-octaprenylphenol, an intermediate step in ubiquinone biosynthesis. The protein is 3-octaprenyl-4-hydroxybenzoate carboxy-lyase of Thiobacillus denitrificans (strain ATCC 25259 / T1).